The sequence spans 262 residues: MALPTFSMRQLIEAGCHFGHNTRRWNPKMAPYLYGQRDNVHIIDLQQTVPMLYRAMQAVRDVTAGGGRVLFVGTKRQAQDVVAEHARRCGQYYVNHRWLGGMLTNWKTISHSIKRLRDLEERFGGGDLLGLTKKEQLNLGREKDKLDMALGGIKEMGGLPDMLFIIDTVKESLAVNEANKLGLPVVAVIDSNSDPRGITYPIPGNDDAIRAIQTYCELISGAAIDGIQAQLGAAGVDVGAAEIVPAETLAAEAPAAEQQPTA.

Belongs to the universal ribosomal protein uS2 family.

In Rhodospirillum rubrum (strain ATCC 11170 / ATH 1.1.1 / DSM 467 / LMG 4362 / NCIMB 8255 / S1), this protein is Small ribosomal subunit protein uS2.